We begin with the raw amino-acid sequence, 264 residues long: S-adenosylmethionine decarboxylase proenzyme (264 aa).

S113 acts as the Schiff-base intermediate with substrate; via pyruvic acid in catalysis. S113 carries the post-translational modification Pyruvic acid (Ser); by autocatalysis. Residue H118 is the Proton acceptor; for processing activity of the active site. The active-site Proton donor; for catalytic activity is the C141.

Belongs to the prokaryotic AdoMetDC family. Type 2 subfamily. Heterooctamer of four alpha and four beta chains arranged as a tetramer of alpha/beta heterodimers. Pyruvate is required as a cofactor. In terms of processing, is synthesized initially as an inactive proenzyme. Formation of the active enzyme involves a self-maturation process in which the active site pyruvoyl group is generated from an internal serine residue via an autocatalytic post-translational modification. Two non-identical subunits are generated from the proenzyme in this reaction, and the pyruvate is formed at the N-terminus of the alpha chain, which is derived from the carboxyl end of the proenzyme. The post-translation cleavage follows an unusual pathway, termed non-hydrolytic serinolysis, in which the side chain hydroxyl group of the serine supplies its oxygen atom to form the C-terminus of the beta chain, while the remainder of the serine residue undergoes an oxidative deamination to produce ammonia and the pyruvoyl group blocking the N-terminus of the alpha chain.

The enzyme catalyses S-adenosyl-L-methionine + H(+) = S-adenosyl 3-(methylsulfanyl)propylamine + CO2. The protein operates within amine and polyamine biosynthesis; S-adenosylmethioninamine biosynthesis; S-adenosylmethioninamine from S-adenosyl-L-methionine: step 1/1. Its function is as follows. Catalyzes the decarboxylation of S-adenosylmethionine to S-adenosylmethioninamine (dcAdoMet), the propylamine donor required for the synthesis of the polyamines spermine and spermidine from the diamine putrescine. The chain is S-adenosylmethionine decarboxylase proenzyme from Pseudomonas aeruginosa (strain UCBPP-PA14).